We begin with the raw amino-acid sequence, 388 residues long: Probable peptidoglycan glycosyltransferase FtsW (388 aa).

The Cytoplasmic portion of the chain corresponds to 1–19 (MMSPSTSAPHNQPIQPELD). The helical transmembrane segment at 20 to 40 (VLLVSTVLLLLGLGLVMVYSA) threads the bilayer. The Periplasmic portion of the chain corresponds to 41 to 55 (SIAIAEAKFGEGSSY). The chain crosses the membrane as a helical span at residues 56-76 (YFLARQASYILAGIAVGIGCF). Topologically, residues 77–89 (RIPLRWWQAYSHY) are cytoplasmic. The chain crosses the membrane as a helical span at residues 90 to 110 (LLGLGILLLLVVLIPGISHEI). At 111–116 (NGSRRW) the chain is on the periplasmic side. A helical transmembrane segment spans residues 117–137 (IPLGITSFQPSELMKLIILIF). The Cytoplasmic segment spans residues 138 to 151 (TADYVVRKAAFKDH). Residues 152–172 (FFKGFLPILALLTIVSLLLLM) form a helical membrane-spanning segment. Topologically, residues 173 to 175 (EPD) are periplasmic. The next 2 helical transmembrane spans lie at 176–196 (LGAT…NGMS) and 197–217 (LKMF…LIII). The Periplasmic portion of the chain corresponds to 218–284 (EPYRMDRINA…DFMFAVLAEE (67 aa)). A helical membrane pass occupies residues 285-305 (LGFAGVVTVISLFFFLLVRIF). The Cytoplasmic portion of the chain corresponds to 306–324 (KVGRTAARLGDQFGSLVAQ). Residues 325-345 (GIGVWLGLQAFINMGVNMGLL) form a helical membrane-spanning segment. Topologically, residues 346 to 351 (PTKGLT) are periplasmic. Residues 352-372 (LPFMSYGGSSIVINSIAIAIL) form a helical membrane-spanning segment. The Cytoplasmic portion of the chain corresponds to 373 to 388 (LRIDWENRLKRRGLNA).

It belongs to the SEDS family. FtsW subfamily.

The protein localises to the cell inner membrane. The catalysed reaction is [GlcNAc-(1-&gt;4)-Mur2Ac(oyl-L-Ala-gamma-D-Glu-L-Lys-D-Ala-D-Ala)](n)-di-trans,octa-cis-undecaprenyl diphosphate + beta-D-GlcNAc-(1-&gt;4)-Mur2Ac(oyl-L-Ala-gamma-D-Glu-L-Lys-D-Ala-D-Ala)-di-trans,octa-cis-undecaprenyl diphosphate = [GlcNAc-(1-&gt;4)-Mur2Ac(oyl-L-Ala-gamma-D-Glu-L-Lys-D-Ala-D-Ala)](n+1)-di-trans,octa-cis-undecaprenyl diphosphate + di-trans,octa-cis-undecaprenyl diphosphate + H(+). The protein operates within cell wall biogenesis; peptidoglycan biosynthesis. Its function is as follows. Peptidoglycan polymerase that is essential for cell division. This is Probable peptidoglycan glycosyltransferase FtsW from Nitrosomonas europaea (strain ATCC 19718 / CIP 103999 / KCTC 2705 / NBRC 14298).